The primary structure comprises 1053 residues: LRR receptor-like serine/threonine-protein kinase GHR1 (1053 aa).

A signal peptide spans 1–18; that stretch reads MNLSRILLLSMFFLSAMG. Over 19 to 630 the chain is Extracellular; that stretch reads QLPSQDIMAL…NKSTNKLVKV (612 aa). 13 LRR repeats span residues 73-93, 94-119, 121-141, 142-165, 166-189, 191-212, 213-237, 239-260, 262-285, 286-309, 310-333, 335-357, and 358-384; these read GVVL…FSNL, TKLV…SFKS, QFLD…IGRS, VSLR…MGGL, ISLQ…LTRL, DLLY…GFEL, ISSL…FFLL, NASY…LLPG, SESI…GFQL, FQNL…FNYV, YDLE…LLKG, SLLL…SIMS, and TTLH…CVLL. Asn92 is a glycosylation site (N-linked (GlcNAc...) asparagine). Residues Ser100 and Ser102 each carry the phosphoserine; by HT1 modification. The N-linked (GlcNAc...) asparagine glycan is linked to Asn103. Residues Ser105 and Ser126 each carry the phosphoserine; by HT1 modification. N-linked (GlcNAc...) asparagine glycosylation is found at Asn146 and Asn153. Asn196 is a glycosylation site (N-linked (GlcNAc...) asparagine). A glycan (N-linked (GlcNAc...) asparagine) is linked at Asn239. Phosphoserine; by HT1 is present on Ser262. N-linked (GlcNAc...) asparagine glycosylation occurs at Asn269. Ser278 is subject to Phosphoserine; by HT1. Thr280 is subject to Phosphothreonine; by HT1. Residue Ser281 is modified to Phosphoserine; by HT1. Phosphoserine; by HT1 is present on Ser325. The N-linked (GlcNAc...) asparagine glycan is linked to Asn347. N-linked (GlcNAc...) asparagine glycosylation occurs at Asn394. LRR repeat units follow at residues 401–425, 426–449, 450–474, 476–498, 499–521, 522–546, 548–570, and 572–592; these read WENI…TPQL, LRAN…IPTH, YPKL…LLSM, TLEE…PSSG, SRIR…VFGS, LTNL…MNDI, SLSS…LSSN, and MAFN…LKNF. Position 406 is a phosphotyrosine; by HT1 (Tyr406). Residue Ser410 is modified to Phosphoserine; by HT1. Thr415 carries the post-translational modification Phosphothreonine; by HT1. Ser417 bears the Phosphoserine; by HT1 mark. N-linked (GlcNAc...) asparagine glycosylation is present at Asn432. Ser434 is modified (phosphoserine; by HT1). Asn534, Asn566, and Asn575 each carry an N-linked (GlcNAc...) asparagine glycan. 3 positions are modified to phosphoserine; by HT1: Ser613, Ser614, and Ser616. The N-linked (GlcNAc...) asparagine glycan is linked to Asn621. Residues 631–651 traverse the membrane as a helical segment; the sequence is VIIVSCAVALIILILVAILLF. Topologically, residues 652-1053 are cytoplasmic; sequence CICKSRRREE…KTIYEDLSSI (402 aa). Residues 662 to 671 are compositionally biased toward basic and acidic residues; the sequence is RSITGKETNR. The interval 662–684 is disordered; the sequence is RSITGKETNRRAQTIPSGSGGGM. Residues Thr669 and Thr675 each carry the phosphothreonine; by HT1 modification. Phosphoserine; by HT1 is present on residues Ser678, Ser680, Ser698, Ser699, and Ser700. Ser704 is subject to Phosphoserine. At Thr713 the chain carries Phosphothreonine; by HT1. Phosphoserine; by HT1 occurs at positions 716 and 718. Thr720 carries the post-translational modification Phosphothreonine; by HT1. Ser721, Ser724, and Ser760 each carry phosphoserine; by HT1. The residue at position 764 (Thr764) is a Phosphothreonine; by HT1. Residue Ser769 is modified to Phosphoserine; by HT1. Positions 770–1053 constitute a Protein kinase domain; the sequence is RAPAEVLGRS…KTIYEDLSSI (284 aa). ATP contacts are provided by residues 776 to 784 and Lys798; that span reads LGRSSHGTS. Thr928 and Thr1010 each carry phosphothreonine; by HT1. Ser1015 carries the post-translational modification Phosphoserine; by HT1. Thr1045 is modified (phosphothreonine; by HT1). Residue Tyr1047 is modified to Phosphotyrosine; by HT1. 2 positions are modified to phosphoserine; by HT1: Ser1051 and Ser1052.

This sequence belongs to the protein kinase superfamily. Ser/Thr protein kinase family. As to quaternary structure, interacts with SLAC1 (via N-terminus). Binds to ABI2, but not ABI1. Interacts with CPK3. Post-translationally, phosphorylated by HT1; this phosphorylation is inhibited by MPK12 and MPK4. Expressed in guard cells and in the vasculature of roots and leaves.

Its subcellular location is the cell membrane. The catalysed reaction is L-seryl-[protein] + ATP = O-phospho-L-seryl-[protein] + ADP + H(+). It catalyses the reaction L-threonyl-[protein] + ATP = O-phospho-L-threonyl-[protein] + ADP + H(+). With respect to regulation, negatively regulated by ABI2. Its function is as follows. Receptor kinase acting as an early component in abscisic acid (ABA) signaling. Required for darkness, ABA, high CO(2) and hydrogen peroxide (H(2)O(2)) induction of S-type anion currents in guard cells leading to stomatal closure, possibly via the phosphorylation and activation of the anion channel SLAC1 and as a scaffolding component. Seems to act in parallel with SRK2E/OST1 in the ABA signaling pathway which regulates stomatal movement. Binds ATP. Involved in the local and/or systemic stomatal responses (e.g. stomatal closure) to light stress. This is LRR receptor-like serine/threonine-protein kinase GHR1 from Arabidopsis thaliana (Mouse-ear cress).